The following is a 96-amino-acid chain: Co-chaperonin GroES (96 aa).

Belongs to the GroES chaperonin family. Heptamer of 7 subunits arranged in a ring. Interacts with the chaperonin GroEL.

The protein localises to the cytoplasm. Together with the chaperonin GroEL, plays an essential role in assisting protein folding. The GroEL-GroES system forms a nano-cage that allows encapsulation of the non-native substrate proteins and provides a physical environment optimized to promote and accelerate protein folding. GroES binds to the apical surface of the GroEL ring, thereby capping the opening of the GroEL channel. This is Co-chaperonin GroES from Buchnera aphidicola subsp. Acyrthosiphon pisum (strain 5A).